A 208-amino-acid chain; its full sequence is uncharacterized protein (208 aa).

The span at 1 to 18 (MSPTKDSHPSPHFPRDSG) shows a compositional bias: basic and acidic residues. Disordered regions lie at residues 1 to 122 (MSPT…LPPP) and 135 to 208 (RECH…TPDG).

This is an uncharacterized protein from Homo sapiens (Human).